The chain runs to 856 residues: Vomeronasal type-2 receptor 116 (856 aa).

Positions 1 to 18 (MFTLIFLFLFLNIPLLVA) are cleaved as a signal peptide. At 19–586 (DFISPRCFWK…VFLSYEEPLG (568 aa)) the chain is on the extracellular side. Residue asparagine 94 is glycosylated (N-linked (GlcNAc...) asparagine). The chain crosses the membrane as a helical span at residues 587 to 607 (VALSLLSLCFSAFTTVVLGIF). Topologically, residues 608–622 (VKHHNTPIVKANNRT) are cytoplasmic. The helical transmembrane segment at 623-643 (LTYLLLISLIFCFLCPLLFIG) threads the bilayer. Topologically, residues 644–658 (HPNSATCILQQLTFG) are extracellular. Residues 659–679 (VVFTVSLSTVLAKTITVVLAF) form a helical membrane-spanning segment. Residues 680–690 (KIIASQRMMKY) lie on the Cytoplasmic side of the membrane. Residues 691 to 711 (FLISGAINYIIPICILIQVIV) traverse the membrane as a helical segment. Residues 712 to 745 (CAVWLRASPPSVDIDAHSEHGQIIIVCHKGSVNA) lie on the Extracellular side of the membrane. A helical membrane pass occupies residues 746 to 766 (FYCVLGYLAILAFGSFTLAFL). The Cytoplasmic portion of the chain corresponds to 767–778 (SRNLPGAFNEAK). The helical transmembrane segment at 779 to 799 (SITFSMLVFCSVWVTFIPVYH) threads the bilayer. Over 800 to 806 (STKGKVM) the chain is Extracellular. Residues 807-827 (VAVEIFSTLASSAGMLGCIFV) traverse the membrane as a helical segment. At 828-856 (PKCYTILFRQDQNSLEMIRVKSSSNVHVS) the chain is on the cytoplasmic side.

Belongs to the G-protein coupled receptor 3 family. In terms of tissue distribution, expressed in the vomeronasal organ.

The protein resides in the cell membrane. Receptor for the Esp1 pheromone. Mediates the response to Esp1 which enhances female sexual receptive behavior (lordosis) upon male mounting, resulting in successful copulation. The sequence is that of Vomeronasal type-2 receptor 116 from Mus musculus (Mouse).